Consider the following 225-residue polypeptide: Probable 3-keto-L-gulonate-6-phosphate decarboxylase (225 aa).

D11 is a substrate binding site. E33 and D62 together coordinate Mg(2+). R202 serves as a coordination point for substrate.

This sequence belongs to the HPS/KGPDC family. KGPDC subfamily. In terms of assembly, homodimer. The cofactor is Mg(2+).

It catalyses the reaction 3-dehydro-L-gulonate 6-phosphate + H(+) = L-xylulose 5-phosphate + CO2. Its function is as follows. Catalyzes the decarboxylation of 3-keto-L-gulonate-6-P into L-xylulose-5-P. In Haemophilus influenzae (strain ATCC 51907 / DSM 11121 / KW20 / Rd), this protein is Probable 3-keto-L-gulonate-6-phosphate decarboxylase (sgbH).